A 490-amino-acid chain; its full sequence is Protein nucleotidyltransferase YdiU (490 aa).

Residues Gly-92, Gly-94, Arg-95, Lys-114, Asp-126, Gly-127, Arg-177, and Arg-184 each contribute to the ATP site. Asp-256 (proton acceptor) is an active-site residue. Residues Asn-257 and Asp-266 each contribute to the Mg(2+) site. Asp-266 contacts ATP.

Belongs to the SELO family. Mg(2+) is required as a cofactor. The cofactor is Mn(2+).

It catalyses the reaction L-seryl-[protein] + ATP = 3-O-(5'-adenylyl)-L-seryl-[protein] + diphosphate. The catalysed reaction is L-threonyl-[protein] + ATP = 3-O-(5'-adenylyl)-L-threonyl-[protein] + diphosphate. The enzyme catalyses L-tyrosyl-[protein] + ATP = O-(5'-adenylyl)-L-tyrosyl-[protein] + diphosphate. It carries out the reaction L-histidyl-[protein] + UTP = N(tele)-(5'-uridylyl)-L-histidyl-[protein] + diphosphate. It catalyses the reaction L-seryl-[protein] + UTP = O-(5'-uridylyl)-L-seryl-[protein] + diphosphate. The catalysed reaction is L-tyrosyl-[protein] + UTP = O-(5'-uridylyl)-L-tyrosyl-[protein] + diphosphate. In terms of biological role, nucleotidyltransferase involved in the post-translational modification of proteins. It can catalyze the addition of adenosine monophosphate (AMP) or uridine monophosphate (UMP) to a protein, resulting in modifications known as AMPylation and UMPylation. This is Protein nucleotidyltransferase YdiU from Bordetella avium (strain 197N).